The sequence spans 235 residues: Dual specificity protein phosphatase 15 (235 aa).

Residue glycine 2 is the site of N-myristoyl glycine attachment. Residues 4-144 enclose the Tyrosine-protein phosphatase domain; sequence GMTKVLPGLY…LEEFGWANSQ (141 aa). Residue cysteine 88 is the Phosphocysteine intermediate of the active site. Over residues 183–193 the composition is skewed to low complexity; that stretch reads AASATTASSAA. Residues 183–212 form a disordered region; sequence AASATTASSAAEGTLQRLVPRSPRDSHQPL.

This sequence belongs to the protein-tyrosine phosphatase family. Non-receptor class dual specificity subfamily. Isoform 1 is expressed in testis; predominantly in developing spermatocytes (at protein level). Isoform 2 is highly expressed in testis. Expressed in spinal cord and specifically in oligodendroglial cells. Expressed in embryonic brain cortex; down-regulated in mice with experimental autoimmune encephalomyelitis (EAE).

It is found in the cell membrane. The enzyme catalyses O-phospho-L-tyrosyl-[protein] + H2O = L-tyrosyl-[protein] + phosphate. The catalysed reaction is O-phospho-L-seryl-[protein] + H2O = L-seryl-[protein] + phosphate. It catalyses the reaction O-phospho-L-threonyl-[protein] + H2O = L-threonyl-[protein] + phosphate. Functionally, may dephosphorylate MAPK13, ATF2, ERBB3, PDGFRB and SNX6. In terms of biological role, may play a role in the regulation of oligodendrocyte differentiation. May play a role in the regulation of myelin formation. Involved in the regulation of Erk1/2 phosphorylation in Schwann cells; the signaling may be linked to the regulation of myelination. The polypeptide is Dual specificity protein phosphatase 15 (Mus musculus (Mouse)).